A 136-amino-acid polypeptide reads, in one-letter code: Purkinje cell protein 2 homolog (136 aa).

Disordered regions lie at residues 1–64 and 86–136; these read MMDQ…PEMD and SSLP…TQAP. The GoLoco 1 domain maps to 23–45; sequence QEGFFNLLSHVQGDRMEGQRCSL. Positions 49–59 are enriched in polar residues; the sequence is PGQTTKSQSDP. The GoLoco 2 domain occupies 63 to 85; sequence MDSLMDMLASTQGRRMDDQRVTV. Positions 107 to 117 are enriched in polar residues; sequence LSPQPLLTPQD. S127 is modified (phosphoserine).

In terms of biological role, may function as a cell-type specific modulator for G protein-mediated cell signaling. This chain is Purkinje cell protein 2 homolog (PCP2), found in Homo sapiens (Human).